The following is a 313-amino-acid chain: Methionyl-tRNA formyltransferase (313 aa).

The segment at 32-51 (QPDRRKGRGKELQPPPAKRK) is disordered. Residue 109-112 (SLLP) participates in (6S)-5,6,7,8-tetrahydrofolate binding.

This sequence belongs to the Fmt family.

The enzyme catalyses L-methionyl-tRNA(fMet) + (6R)-10-formyltetrahydrofolate = N-formyl-L-methionyl-tRNA(fMet) + (6S)-5,6,7,8-tetrahydrofolate + H(+). Attaches a formyl group to the free amino group of methionyl-tRNA(fMet). The formyl group appears to play a dual role in the initiator identity of N-formylmethionyl-tRNA by promoting its recognition by IF2 and preventing the misappropriation of this tRNA by the elongation apparatus. In Natranaerobius thermophilus (strain ATCC BAA-1301 / DSM 18059 / JW/NM-WN-LF), this protein is Methionyl-tRNA formyltransferase.